Reading from the N-terminus, the 252-residue chain is Triosephosphate isomerase (252 aa).

9-11 (NWK) contacts substrate. His96 (electrophile) is an active-site residue. Residue Glu166 is the Proton acceptor of the active site. Residues Gly172, Ser212, and 233–234 (GG) contribute to the substrate site.

This sequence belongs to the triosephosphate isomerase family. Homodimer.

The protein localises to the cytoplasm. It catalyses the reaction D-glyceraldehyde 3-phosphate = dihydroxyacetone phosphate. It participates in carbohydrate biosynthesis; gluconeogenesis. The protein operates within carbohydrate degradation; glycolysis; D-glyceraldehyde 3-phosphate from glycerone phosphate: step 1/1. Involved in the gluconeogenesis. Catalyzes stereospecifically the conversion of dihydroxyacetone phosphate (DHAP) to D-glyceraldehyde-3-phosphate (G3P). In Prosthecochloris aestuarii (strain DSM 271 / SK 413), this protein is Triosephosphate isomerase.